The sequence spans 377 residues: tRNA(Met) cytidine acetate ligase (377 aa).

Residues 7 to 20 (VTEY…HLYH), G100, N153, and R178 each bind ATP.

The protein belongs to the TmcAL family.

It localises to the cytoplasm. The catalysed reaction is cytidine(34) in elongator tRNA(Met) + acetate + ATP = N(4)-acetylcytidine(34) in elongator tRNA(Met) + AMP + diphosphate. Its function is as follows. Catalyzes the formation of N(4)-acetylcytidine (ac(4)C) at the wobble position of elongator tRNA(Met), using acetate and ATP as substrates. First activates an acetate ion to form acetyladenylate (Ac-AMP) and then transfers the acetyl group to tRNA to form ac(4)C34. The protein is tRNA(Met) cytidine acetate ligase of Staphylococcus saprophyticus subsp. saprophyticus (strain ATCC 15305 / DSM 20229 / NCIMB 8711 / NCTC 7292 / S-41).